A 2059-amino-acid polypeptide reads, in one-letter code: DNA polymerase theta (2059 aa).

The segment at 25–45 (DKENAQPGNGNIQVQSAGNEV) is disordered. Residues 30–45 (QPGNGNIQVQSAGNEV) show a composition bias toward polar residues. A Helicase ATP-binding domain is found at 243 to 416 (PRLLFEHCNL…WLDAELYITN (174 aa)). 256–263 (APTSAGKT) serves as a coordination point for ATP. Residues 357–360 (DEVH) carry the DEAH box motif. The region spanning 464 to 666 (CIETLLEGCS…HLKRALLEVI (203 aa)) is the Helicase C-terminal domain. Disordered stretches follow at residues 1052-1073 (PPVK…KNPR), 1168-1190 (PQLA…VNEG), 1204-1274 (QRTQ…SRKV), and 1330-1372 (PHAS…GVSS). Over residues 1062–1071 (ENGTANSQKN) the composition is skewed to polar residues. Residues 1213-1274 (KDQPIQASRS…NANRTASRKV (62 aa)) are compositionally biased toward polar residues. Basic and acidic residues predominate over residues 1355 to 1365 (REIEIDLESKN).

The protein belongs to the DNA polymerase type-A family. The cofactor is Mg(2+). Post-translationally, in adult males, cleaved to produce a 100 kDa form. As to expression, expressed in ovaries (at protein level).

It localises to the nucleus. It carries out the reaction DNA(n) + a 2'-deoxyribonucleoside 5'-triphosphate = DNA(n+1) + diphosphate. With respect to regulation, resistant to aphidicolin, but sensitive to dideoxythymindine triphosphate (ddTTP) and N-ethyl malemide (NEM). Functionally, multifunctional protein with both DNA polymerase and ATPase activities. Might have 3' to 5' exonuclease activity. Plays a role in different DNA repair pathways such as DNA strand cross-link repair and microhomology-mediated end-joining (MMEJ), an alternative non-homologous end-joining (NHEJ) machinery triggered in response to double-strand breaks. MMEJ is an error-prone repair pathway that produces deletions of sequences from the strand being repaired and promotes genomic rearrangements, such as telomere fusions. Utilizes short microhomologies present in partially and fully single-stranded DNA (ssDNA) as primers for DNA synthesis. Prefers poly(dA)/oligo(dT) as a template-primer. The ATPase activity is necessary during interstrand cross-link (ICL) repair and has a critical role in generating templated insertions during MMEJ. Necessary for processing DNA damage induced by oxygen and N-ethylation. In follicle cells, contributes to double-strand break repair at physiological rereplication forks necessary for survival of fertilized eggs. The protein is DNA polymerase theta of Drosophila melanogaster (Fruit fly).